The primary structure comprises 345 residues: Biotin synthase (345 aa).

The region spanning 39 to 266 is the Radical SAM core domain; that stretch reads NEVQVSTLLS…ASHVRLSAGR (228 aa). [4Fe-4S] cluster contacts are provided by Cys54, Cys58, and Cys61. Positions 98, 129, 189, and 261 each coordinate [2Fe-2S] cluster.

It belongs to the radical SAM superfamily. Biotin synthase family. In terms of assembly, homodimer. It depends on [4Fe-4S] cluster as a cofactor. [2Fe-2S] cluster is required as a cofactor.

The catalysed reaction is (4R,5S)-dethiobiotin + (sulfur carrier)-SH + 2 reduced [2Fe-2S]-[ferredoxin] + 2 S-adenosyl-L-methionine = (sulfur carrier)-H + biotin + 2 5'-deoxyadenosine + 2 L-methionine + 2 oxidized [2Fe-2S]-[ferredoxin]. The protein operates within cofactor biosynthesis; biotin biosynthesis; biotin from 7,8-diaminononanoate: step 2/2. In terms of biological role, catalyzes the conversion of dethiobiotin (DTB) to biotin by the insertion of a sulfur atom into dethiobiotin via a radical-based mechanism. In Idiomarina loihiensis (strain ATCC BAA-735 / DSM 15497 / L2-TR), this protein is Biotin synthase.